We begin with the raw amino-acid sequence, 429 residues long: Serine hydroxymethyltransferase (429 aa).

(6S)-5,6,7,8-tetrahydrofolate-binding positions include Leu-130 and 134-136; that span reads GHL. Position 239 is an N6-(pyridoxal phosphate)lysine (Lys-239).

This sequence belongs to the SHMT family. In terms of assembly, homodimer. Pyridoxal 5'-phosphate is required as a cofactor.

Its subcellular location is the cytoplasm. It catalyses the reaction (6R)-5,10-methylene-5,6,7,8-tetrahydrofolate + glycine + H2O = (6S)-5,6,7,8-tetrahydrofolate + L-serine. It functions in the pathway one-carbon metabolism; tetrahydrofolate interconversion. It participates in amino-acid biosynthesis; glycine biosynthesis; glycine from L-serine: step 1/1. Catalyzes the reversible interconversion of serine and glycine with tetrahydrofolate (THF) serving as the one-carbon carrier. This reaction serves as the major source of one-carbon groups required for the biosynthesis of purines, thymidylate, methionine, and other important biomolecules. Also exhibits THF-independent aldolase activity toward beta-hydroxyamino acids, producing glycine and aldehydes, via a retro-aldol mechanism. The chain is Serine hydroxymethyltransferase from Phenylobacterium zucineum (strain HLK1).